The following is a 257-amino-acid chain: Hydroxyacylglutathione hydrolase (257 aa).

7 residues coordinate Zn(2+): H54, H56, D58, H59, H113, D137, and H175.

It belongs to the metallo-beta-lactamase superfamily. Glyoxalase II family. Monomer. Zn(2+) is required as a cofactor.

It catalyses the reaction an S-(2-hydroxyacyl)glutathione + H2O = a 2-hydroxy carboxylate + glutathione + H(+). Its pathway is secondary metabolite metabolism; methylglyoxal degradation; (R)-lactate from methylglyoxal: step 2/2. Functionally, thiolesterase that catalyzes the hydrolysis of S-D-lactoyl-glutathione to form glutathione and D-lactic acid. In Nostoc punctiforme (strain ATCC 29133 / PCC 73102), this protein is Hydroxyacylglutathione hydrolase.